The primary structure comprises 361 residues: Thymidine kinase (361 aa).

17-24 serves as a coordination point for ATP; sequence GPHGVGKS. Catalysis depends on Glu-46, which acts as the Proton acceptor. Substrate-binding residues include Tyr-64 and Gln-88. Arg-184 serves as a coordination point for ATP. Arg-190 lines the substrate pocket.

The protein belongs to the herpesviridae thymidine kinase family. Homodimer.

The catalysed reaction is thymidine + ATP = dTMP + ADP + H(+). Its function is as follows. Catalyzes the transfer of the gamma-phospho group of ATP to thymidine to generate dTMP in the salvage pathway of pyrimidine synthesis. The dTMP serves as a substrate for DNA polymerase during viral DNA replication. Allows the virus to be reactivated and to grow in non-proliferative cells lacking a high concentration of phosphorylated nucleic acid precursors. The polypeptide is Thymidine kinase (Saimiriine herpesvirus 1 (strain MV-5-4-PSL) (SaHV-1)).